The sequence spans 343 residues: Adenine deaminase (343 aa).

Zn(2+)-binding residues include His-17, His-19, and His-197. Residue Glu-200 is the Proton donor of the active site. Residue Asp-278 coordinates Zn(2+). Residue Asp-279 coordinates substrate.

The protein belongs to the metallo-dependent hydrolases superfamily. Adenosine and AMP deaminases family. Adenine deaminase type 2 subfamily. Requires Zn(2+) as cofactor.

The enzyme catalyses adenine + H2O + H(+) = hypoxanthine + NH4(+). Catalyzes the hydrolytic deamination of adenine to hypoxanthine. Plays an important role in the purine salvage pathway and in nitrogen catabolism. This Rhodopseudomonas palustris (strain BisB18) protein is Adenine deaminase.